The following is a 559-amino-acid chain: WD repeat-containing protein JIP5 (559 aa).

9 WD repeats span residues 26–67 (QYSD…NYLQ), 77–116 (ADGKKSKKVKFWTVYDIINENKDNADTGSDSGVELIWKTK), 117–156 (RHKGSVRCIALDSDGQFVYTVGTDNVLKKADVLTGKVVKK), 162–201 (DNGGKYTKMVKSPTHSLLILGDENGTVIVLNSETLQETNR), 207–247 (NGDD…ESDF), 265–306 (DQED…LEDQ), 313–347 (AKEESIDCIVPTLQDDNCIWCGCSNGNIYKADIKK), 354–394 (RNHS…SEEE), and 428–470 (DSDG…SDDE). 2 disordered regions span residues 386–500 (SRNE…LIGL) and 515–559 (EESE…FEGL). The span at 391–417 (SEEEDDEESESFSDSDSDSDSDSDSDS) shows a compositional bias: acidic residues. Residues 418–428 (DSDRDRDRDSD) are compositionally biased toward basic and acidic residues. Positions 482 to 494 (DMDDIDEGSDSSE) are enriched in acidic residues. Basic and acidic residues predominate over residues 520 to 534 (EGEKLQKKRKNEPSK). The segment covering 535-544 (KNTKNLKKVK) has biased composition (basic residues).

It belongs to the WD repeat WDR55 family.

The protein localises to the nucleus. It is found in the nucleolus. The chain is WD repeat-containing protein JIP5 (JIP5) from Vanderwaltozyma polyspora (strain ATCC 22028 / DSM 70294 / BCRC 21397 / CBS 2163 / NBRC 10782 / NRRL Y-8283 / UCD 57-17) (Kluyveromyces polysporus).